The sequence spans 229 residues: 3-isopropylmalate dehydratase small subunit (229 aa).

The tract at residues 208 to 229 is disordered; that stretch reads KIESAREPDDDWTGPLADRGII.

It belongs to the LeuD family. LeuD type 1 subfamily. In terms of assembly, heterodimer of LeuC and LeuD.

It catalyses the reaction (2R,3S)-3-isopropylmalate = (2S)-2-isopropylmalate. It functions in the pathway amino-acid biosynthesis; L-leucine biosynthesis; L-leucine from 3-methyl-2-oxobutanoate: step 2/4. Functionally, catalyzes the isomerization between 2-isopropylmalate and 3-isopropylmalate, via the formation of 2-isopropylmaleate. The polypeptide is 3-isopropylmalate dehydratase small subunit (Bifidobacterium longum subsp. infantis (strain ATCC 15697 / DSM 20088 / JCM 1222 / NCTC 11817 / S12)).